Reading from the N-terminus, the 71-residue chain is Large ribosomal subunit protein uL29 (71 aa).

It belongs to the universal ribosomal protein uL29 family.

The sequence is that of Large ribosomal subunit protein uL29 from Rickettsia massiliae (strain Mtu5).